The primary structure comprises 398 residues: Mitochondrial protein import protein mas5 (398 aa).

The J domain maps to 7 to 88 (GYYKVLELSP…KKKKEYDSGM (82 aa)). The CR-type zinc-finger motif lies at 139 to 219 (GKVSKFNVRT…CNGAEYIQDK (81 aa)). Position 144–146 (144–146 (FNV)) interacts with substrate. Residues Cys-152, Cys-155, Cys-166, Cys-169, Cys-192, Cys-195, Cys-207, and Cys-210 each coordinate Zn(2+). CXXCXGXG motif repeat units follow at residues 152–159 (CTTCDGKG), 166–173 (CKKCNGNG), 192–199 (CDGCDGSG), and 207–214 (CSTCNGAE). Substrate is bound by residues 221 to 222 (MF) and 253 to 255 (VIF). Positions 367–386 (FGSMPEPERDHEDASEEGAQ) are disordered.

Belongs to the DnaJ family. Homodimer. Zn(2+) serves as cofactor.

The protein localises to the cytoplasm. Its function is as follows. Probably involved in mitosomal protein import. This chain is Mitochondrial protein import protein mas5 (MAS5), found in Encephalitozoon cuniculi (strain GB-M1) (Microsporidian parasite).